Reading from the N-terminus, the 336-residue chain is NADH-quinone oxidoreductase subunit H (336 aa).

8 helical membrane passes run 12 to 32 (FLKIVIVFSLALGIGAYLTWF), 84 to 104 (VVMALVPSILLLTIIPFGPGF), 118 to 138 (VNIALLLAFAFGSLSVYGTIF), 156 to 176 (AAVVIAYEVVLGFSVLGVILL), 193 to 213 (GVWFIFYQPVAFILYLFCMLA), 247 to 267 (LAEWYVNVIALSAIAVVLFFG), 274 to 294 (IFGPLSPYFWFVFKTFALVFF), and 313 to 333 (IAWKILLPIAILNVIITAVVV).

The protein belongs to the complex I subunit 1 family. As to quaternary structure, NDH-1 is composed of 14 different subunits. Subunits NuoA, H, J, K, L, M, N constitute the membrane sector of the complex.

It is found in the cell inner membrane. The enzyme catalyses a quinone + NADH + 5 H(+)(in) = a quinol + NAD(+) + 4 H(+)(out). In terms of biological role, NDH-1 shuttles electrons from NADH, via FMN and iron-sulfur (Fe-S) centers, to quinones in the respiratory chain. The immediate electron acceptor for the enzyme in this species is believed to be ubiquinone. Couples the redox reaction to proton translocation (for every two electrons transferred, four hydrogen ions are translocated across the cytoplasmic membrane), and thus conserves the redox energy in a proton gradient. This subunit may bind ubiquinone. This chain is NADH-quinone oxidoreductase subunit H, found in Aquifex aeolicus (strain VF5).